A 311-amino-acid polypeptide reads, in one-letter code: Acetaldehyde dehydrogenase 1 (311 aa).

11–14 (SGNI) lines the NAD(+) pocket. Residue Cys129 is the Acyl-thioester intermediate of the active site. NAD(+) is bound by residues 161–169 (SAGPGTRAN) and Asn288.

This sequence belongs to the acetaldehyde dehydrogenase family.

It carries out the reaction acetaldehyde + NAD(+) + CoA = acetyl-CoA + NADH + H(+). This chain is Acetaldehyde dehydrogenase 1, found in Novosphingobium aromaticivorans (strain ATCC 700278 / DSM 12444 / CCUG 56034 / CIP 105152 / NBRC 16084 / F199).